Consider the following 128-residue polypeptide: Aspartate 1-decarboxylase (128 aa).

Ser-25 acts as the Schiff-base intermediate with substrate; via pyruvic acid in catalysis. Position 25 is a pyruvic acid (Ser) (Ser-25). Thr-57 is a substrate binding site. The active-site Proton donor is Tyr-58. 73–75 (GAA) provides a ligand contact to substrate.

Belongs to the PanD family. In terms of assembly, heterooctamer of four alpha and four beta subunits. Pyruvate serves as cofactor. Is synthesized initially as an inactive proenzyme, which is activated by self-cleavage at a specific serine bond to produce a beta-subunit with a hydroxyl group at its C-terminus and an alpha-subunit with a pyruvoyl group at its N-terminus.

It is found in the cytoplasm. The enzyme catalyses L-aspartate + H(+) = beta-alanine + CO2. Its pathway is cofactor biosynthesis; (R)-pantothenate biosynthesis; beta-alanine from L-aspartate: step 1/1. In terms of biological role, catalyzes the pyruvoyl-dependent decarboxylation of aspartate to produce beta-alanine. The polypeptide is Aspartate 1-decarboxylase (Chlorobium limicola (strain DSM 245 / NBRC 103803 / 6330)).